Reading from the N-terminus, the 272-residue chain is Hydroxyethylthiazole kinase (272 aa).

Met-44 lines the substrate pocket. Residues Lys-119 and Thr-172 each coordinate ATP. Gly-199 lines the substrate pocket.

Belongs to the Thz kinase family. It depends on Mg(2+) as a cofactor.

The enzyme catalyses 5-(2-hydroxyethyl)-4-methylthiazole + ATP = 4-methyl-5-(2-phosphooxyethyl)-thiazole + ADP + H(+). It participates in cofactor biosynthesis; thiamine diphosphate biosynthesis; 4-methyl-5-(2-phosphoethyl)-thiazole from 5-(2-hydroxyethyl)-4-methylthiazole: step 1/1. Functionally, catalyzes the phosphorylation of the hydroxyl group of 4-methyl-5-beta-hydroxyethylthiazole (THZ). This is Hydroxyethylthiazole kinase from Enterococcus faecalis (strain ATCC 700802 / V583).